We begin with the raw amino-acid sequence, 366 residues long: uncharacterized protein (366 aa).

The next 6 helical transmembrane spans lie at 30 to 50 (FWTYMLFYLQFLVGINGAVGI), 66 to 86 (IIIAFLALVNILLSLIGIIVI), 136 to 156 (IFISIFIGIYMISVIALGYLA), 162 to 182 (IILFGTGFFIIVVIIYFLDLL), 198 to 218 (IGVVLFISFIPPLMNYFIYDI), and 225 to 245 (YIPESFIVAMIVILIFVIIDV).

It is found in the cell membrane. This is an uncharacterized protein from Methanocaldococcus jannaschii (strain ATCC 43067 / DSM 2661 / JAL-1 / JCM 10045 / NBRC 100440) (Methanococcus jannaschii).